The primary structure comprises 558 residues: Formate--tetrahydrofolate ligase (558 aa).

An ATP-binding site is contributed by 65 to 72 (TPAGEGKT).

The protein belongs to the formate--tetrahydrofolate ligase family.

It catalyses the reaction (6S)-5,6,7,8-tetrahydrofolate + formate + ATP = (6R)-10-formyltetrahydrofolate + ADP + phosphate. Its pathway is one-carbon metabolism; tetrahydrofolate interconversion. In Methylobacterium nodulans (strain LMG 21967 / CNCM I-2342 / ORS 2060), this protein is Formate--tetrahydrofolate ligase.